Consider the following 447-residue polypeptide: GTPase Der (447 aa).

2 consecutive EngA-type G domains span residues 2-166 (YRVA…PEYE) and 183-358 (IKVA…NQSW). GTP-binding positions include 8–15 (GRPNVGKS), 55–59 (DTGGY), 118–121 (NKID), 189–196 (GKPNAGKS), 236–240 (DTAGL), and 301–304 (NKID). The KH-like domain maps to 359 to 443 (KRVGTGQLNR…PIKLLLRGKE (85 aa)).

It belongs to the TRAFAC class TrmE-Era-EngA-EngB-Septin-like GTPase superfamily. EngA (Der) GTPase family. Associates with the 50S ribosomal subunit.

In terms of biological role, GTPase that plays an essential role in the late steps of ribosome biogenesis. The protein is GTPase Der of Persephonella marina (strain DSM 14350 / EX-H1).